The primary structure comprises 293 residues: Small ribosomal subunit biogenesis GTPase RsgA (293 aa).

Residues 63–223 form the CP-type G domain; that stretch reads KNQLNRPPIA…VADTPGFSSL (161 aa). Residues 112-115 and 166-174 contribute to the GTP site; these read SKTD and GQSGVGKSS. Zn(2+) contacts are provided by Cys247, Cys252, His254, and Cys260.

It belongs to the TRAFAC class YlqF/YawG GTPase family. RsgA subfamily. As to quaternary structure, monomer. Associates with 30S ribosomal subunit, binds 16S rRNA. Zn(2+) serves as cofactor.

The protein resides in the cytoplasm. Functionally, one of several proteins that assist in the late maturation steps of the functional core of the 30S ribosomal subunit. Helps release RbfA from mature subunits. May play a role in the assembly of ribosomal proteins into the subunit. Circularly permuted GTPase that catalyzes slow GTP hydrolysis, GTPase activity is stimulated by the 30S ribosomal subunit. The chain is Small ribosomal subunit biogenesis GTPase RsgA from Shouchella clausii (strain KSM-K16) (Alkalihalobacillus clausii).